Here is a 355-residue protein sequence, read N- to C-terminus: UDP-N-acetylglucosamine--N-acetylmuramyl-(pentapeptide) pyrophosphoryl-undecaprenol N-acetylglucosamine transferase (355 aa).

UDP-N-acetyl-alpha-D-glucosamine contacts are provided by residues threonine 15 to glycine 17, asparagine 127, arginine 163, serine 191, isoleucine 244, alanine 263 to glutamate 268, and glutamine 288.

This sequence belongs to the glycosyltransferase 28 family. MurG subfamily.

The protein resides in the cell inner membrane. It catalyses the reaction di-trans,octa-cis-undecaprenyl diphospho-N-acetyl-alpha-D-muramoyl-L-alanyl-D-glutamyl-meso-2,6-diaminopimeloyl-D-alanyl-D-alanine + UDP-N-acetyl-alpha-D-glucosamine = di-trans,octa-cis-undecaprenyl diphospho-[N-acetyl-alpha-D-glucosaminyl-(1-&gt;4)]-N-acetyl-alpha-D-muramoyl-L-alanyl-D-glutamyl-meso-2,6-diaminopimeloyl-D-alanyl-D-alanine + UDP + H(+). The protein operates within cell wall biogenesis; peptidoglycan biosynthesis. Functionally, cell wall formation. Catalyzes the transfer of a GlcNAc subunit on undecaprenyl-pyrophosphoryl-MurNAc-pentapeptide (lipid intermediate I) to form undecaprenyl-pyrophosphoryl-MurNAc-(pentapeptide)GlcNAc (lipid intermediate II). This Escherichia coli O45:K1 (strain S88 / ExPEC) protein is UDP-N-acetylglucosamine--N-acetylmuramyl-(pentapeptide) pyrophosphoryl-undecaprenol N-acetylglucosamine transferase.